Consider the following 255-residue polypeptide: Small ribosomal subunit protein uS2 (255 aa).

Belongs to the universal ribosomal protein uS2 family.

The protein is Small ribosomal subunit protein uS2 of Streptococcus uberis (strain ATCC BAA-854 / 0140J).